Reading from the N-terminus, the 385-residue chain is m7GpppN-mRNA hydrolase (385 aa).

The 132-residue stretch at 95 to 226 (MGVPTYGAII…KLGLAPNKFF (132 aa)) folds into the Nudix hydrolase domain. A Nudix box motif is present at residues 129–150 (GKVNKEEAPHDCAAREVFEETG). Mn(2+)-binding residues include glutamate 144 and glutamate 148. Phosphoserine occurs at positions 246, 247, 249, 276, and 284. Residues 247–266 (SDSDNGFSSTGSTPAKPTVE) form a disordered region. The segment covering 249-259 (SDNGFSSTGST) has biased composition (low complexity).

This sequence belongs to the Nudix hydrolase family. DCP2 subfamily. As to quaternary structure, found in a mRNA decay complex with LSM1, LSM3, LSM4, EXOSC2, EXOSC4, EXOSC10, PARN, XRN1, CNOT6, UPF1, UPF2 and UPF3B. Forms a complex with DCP1A, EDC3, DDX6 and EDC4/HEDLS, within this complex directly interacts with EDC4/HEDLS. Interacts with DPC1B, UPF1, UPF2 and UPF3B. Associates with polysomes. Interacts (via N-terminus and C-terminus) with TRIM21 (via N-terminus and C-terminus). Interacts with LIMD1, WTIP and AJUBA. Interacts with DDX17 in an RNA-dependent manner. Interacts with ZC3HAV1. Interacts with APOBEC3G in an RNA-dependent manner. Interacts with ZFP36L1 (via N-terminus). Interacts with NBDY. It depends on Mn(2+) as a cofactor. Mg(2+) serves as cofactor.

The protein resides in the cytoplasm. It is found in the P-body. It localises to the nucleus. The catalysed reaction is a 5'-end (N(7)-methyl 5'-triphosphoguanosine)-ribonucleoside in mRNA + H2O = N(7)-methyl-GDP + a 5'-end phospho-ribonucleoside in mRNA + 2 H(+). Functionally, decapping metalloenzyme that catalyzes the cleavage of the cap structure on mRNAs. Removes the 7-methyl guanine cap structure from mRNA molecules, yielding a 5'-phosphorylated mRNA fragment and 7m-GDP. Necessary for the degradation of mRNAs, both in normal mRNA turnover and in nonsense-mediated mRNA decay. Plays a role in replication-dependent histone mRNA degradation. Has higher activity towards mRNAs that lack a poly(A) tail. Has no activity towards a cap structure lacking an RNA moiety. The presence of a N(6)-methyladenosine methylation at the second transcribed position of mRNAs (N(6),2'-O-dimethyladenosine cap; m6A(m)) provides resistance to DCP2-mediated decapping. Blocks autophagy in nutrient-rich conditions by repressing the expression of ATG-related genes through degradation of their transcripts. The sequence is that of m7GpppN-mRNA hydrolase (DCP2) from Pongo abelii (Sumatran orangutan).